Reading from the N-terminus, the 1910-residue chain is Endoribonuclease dcr-1 (1910 aa).

A Helicase ATP-binding domain is found at Leu-20–Glu-201. Leu-33–Thr-40 is a binding site for ATP. The DEAH box signature appears at Asp-145–His-148. The region spanning Glu-371–Ser-542 is the Helicase C-terminal domain. The 97-residue stretch at Ala-571 to Lys-667 folds into the Dicer dsRNA-binding fold domain. One can recognise a PAZ domain in the interval Tyr-845–Pro-1003. Disordered stretches follow at residues Arg-951–Ser-988, Thr-1227–Thr-1248, and Leu-1272–Phe-1309. Composition is skewed to polar residues over residues Ile-970 to Ser-988 and Thr-1227 to Lys-1245. Residues Lys-1245–Lys-1280 are a coiled coil. Over residues Leu-1272–Asp-1286 the composition is skewed to basic and acidic residues. Residues Val-1288 to Asn-1304 show a composition bias toward acidic residues. RNase III domains lie at Val-1381–Gly-1589 and Phe-1643–Gly-1805. Positions 1682, 1791, and 1794 each coordinate Mg(2+). The DRBM domain maps to Ser-1833 to Gln-1896.

Belongs to the helicase family. Dicer subfamily. In terms of assembly, component of the ERI/DICER complex at least composed of dcr-1, rrf-3 and eri-1. Interacts with pir-1. Mg(2+) is required as a cofactor. Requires Mn(2+) as cofactor.

Functionally, component of the ERI/DICER complex which is involved in processing amplified double-stranded RNA (dsRNA) intermediates during small-RNA-mediated gene-silencing or RNA interference (RNAi). Involved in cleaving dsRNA in the RNAi pathway. It produces 21 to 23 bp dsRNAs (siRNAs) which target the selective destruction of homologous RNAs. Seems to process the precursor of the small temporal RNA let-7 which is involved in developmental timing. Required for avoidance behavior induced by small RNAs derived from pathogenic bacteria such as P.aeruginosa. Involved in innate immunity through its role in small RNA processing. In terms of biological role, tDCR-1 acts as a deoxyribonuclease (DNase) initiating DNA fragmentation during apoptosis, upstream of nucleases cps-6, crn-2 and nuc-1. The chain is Endoribonuclease dcr-1 from Caenorhabditis elegans.